We begin with the raw amino-acid sequence, 325 residues long: 7,8-didemethyl-8-hydroxy-5-deazariboflavin synthase (325 aa).

The region spanning 1 to 241 (MTYSKNVFVP…SDIAVQVAPN (241 aa)) is the Radical SAM core domain. Cysteine 15, cysteine 19, and cysteine 22 together coordinate [4Fe-4S] cluster.

Belongs to the radical SAM superfamily. CofG family. In terms of assembly, consists of two subunits, CofG and CofH. [4Fe-4S] cluster is required as a cofactor.

The catalysed reaction is 5-amino-5-(4-hydroxybenzyl)-6-(D-ribitylimino)-5,6-dihydrouracil + S-adenosyl-L-methionine = 7,8-didemethyl-8-hydroxy-5-deazariboflavin + 5'-deoxyadenosine + L-methionine + NH4(+) + H(+). It participates in cofactor biosynthesis; coenzyme F0 biosynthesis. In terms of biological role, catalyzes the radical-mediated synthesis of 7,8-didemethyl-8-hydroxy-5-deazariboflavin from 5-amino-5-(4-hydroxybenzyl)-6-(D-ribitylimino)-5,6-dihydrouracil. This chain is 7,8-didemethyl-8-hydroxy-5-deazariboflavin synthase, found in Methanosarcina barkeri (strain Fusaro / DSM 804).